A 246-amino-acid polypeptide reads, in one-letter code: Probable transcriptional regulatory protein ASA_2843 (246 aa).

It belongs to the TACO1 family.

It localises to the cytoplasm. This is Probable transcriptional regulatory protein ASA_2843 from Aeromonas salmonicida (strain A449).